A 192-amino-acid polypeptide reads, in one-letter code: Leucine-rich repeat-containing protein 51 (192 aa).

3 LRR repeats span residues 49–71 (SLTQ…NQVA), 80–101 (NLAW…LTTF), and 103–124 (NLSV…NKLA). Residues 137–175 (NPMEEEKGYRQYVLCTLPHITTFDFSGVTKADRTTAEVW) enclose the LRRCT domain.

It is found in the cytoplasm. This chain is Leucine-rich repeat-containing protein 51, found in Macaca mulatta (Rhesus macaque).